Here is a 191-residue protein sequence, read N- to C-terminus: Ankyrin repeat domain-containing protein 22 (191 aa).

ANK repeat units follow at residues Asn-39–Leu-68, Lys-72–Leu-100, Leu-101–Ala-130, and Tyr-134–Ile-163.

This Homo sapiens (Human) protein is Ankyrin repeat domain-containing protein 22 (ANKRD22).